The primary structure comprises 231 residues: Uracil-DNA glycosylase (231 aa).

Asp-71 serves as the catalytic Proton acceptor.

This sequence belongs to the uracil-DNA glycosylase (UDG) superfamily. UNG family.

The protein localises to the cytoplasm. It catalyses the reaction Hydrolyzes single-stranded DNA or mismatched double-stranded DNA and polynucleotides, releasing free uracil.. Excises uracil residues from the DNA which can arise as a result of misincorporation of dUMP residues by DNA polymerase or due to deamination of cytosine. This chain is Uracil-DNA glycosylase, found in Pseudomonas aeruginosa (strain UCBPP-PA14).